Here is a 206-residue protein sequence, read N- to C-terminus: uncharacterized protein (206 aa).

2 disordered regions span residues 38–88 (RLQQ…NKNA) and 160–206 (HQNT…SVQE). Low complexity predominate over residues 40–73 (QQQQQQQQQQQQNRTASSLQQPQQQQPISPPLFL). Phosphoserine is present on serine 68. Residues 78-88 (TSENSNLNKNA) show a composition bias toward polar residues. The span at 165 to 186 (SSSNPGSMSSSPPNSASSIFNS) shows a compositional bias: low complexity. Positions 192 to 206 (PYTSQSFNPLESVQE) are enriched in polar residues.

Its subcellular location is the cytoplasm. This is an uncharacterized protein from Saccharomyces cerevisiae (strain ATCC 204508 / S288c) (Baker's yeast).